The following is a 602-amino-acid chain: Putative pentatricopeptide repeat-containing protein At1g12700, mitochondrial (602 aa).

Residues 1-95 constitute a mitochondrion transit peptide; that stretch reads MMIKRSITTN…PSLVDFSRFF (95 aa). 14 PPR repeats span residues 87 to 121, 122 to 156, 157 to 191, 192 to 226, 227 to 261, 262 to 296, 297 to 331, 332 to 366, 367 to 401, 402 to 436, 437 to 471, 472 to 506, 507 to 541, and 542 to 576; these read SLVD…GIAH, NIYT…GYEP, DTTT…GCQP, DVVT…NVKA, DVFT…GIKS, SVVT…EIVP, NVIT…GISP, NIIT…KCSP, DIVT…GLVA, NAVT…GVLP, DVMT…KMDL, GIVM…GVKP, NVMT…GNAP, and NDCT…GFSA.

This sequence belongs to the PPR family. P subfamily.

It localises to the mitochondrion. This chain is Putative pentatricopeptide repeat-containing protein At1g12700, mitochondrial, found in Arabidopsis thaliana (Mouse-ear cress).